Here is a 527-residue protein sequence, read N- to C-terminus: Catalase (527 aa).

Over residues 1–22 (MADSRDPASDQMKLWKEQRAAQ) the composition is skewed to basic and acidic residues. The disordered stretch occupies residues 1 to 34 (MADSRDPASDQMKLWKEQRAAQKPDVLTTGGGNP). Ala-2 carries the N-acetylalanine modification. Ser-9 is subject to Phosphoserine. Position 13 is an N6-succinyllysine (Lys-13). Residues His-75 and Asn-148 contribute to the active site. The NADP(+) site is built by His-194, Ser-201, Arg-203, and Asn-213. An N6-succinyllysine modification is found at Lys-221. At Lys-233 the chain carries N6-acetyllysine. Positions 237, 303, and 305 each coordinate NADP(+). Position 358 (Tyr-358) interacts with heme. 2 positions are modified to phosphoserine: Ser-422 and Ser-434. N6-acetyllysine; alternate is present on residues Lys-449 and Lys-480. 2 positions are modified to N6-succinyllysine; alternate: Lys-449 and Lys-480. The residue at position 499 (Lys-499) is an N6-acetyllysine. Thr-511 is subject to Phosphothreonine. Ser-517 is modified (phosphoserine). The short motif at 524–527 (KANL) is the Microbody targeting signal; atypical element.

It belongs to the catalase family. In terms of assembly, homotetramer. Interacts (via microbody targeting signal) with PEX5, monomeric form interacts with PEX5, leading to its translocation into peroxisomes. Heme is required as a cofactor. It depends on NADP(+) as a cofactor.

It is found in the peroxisome matrix. It catalyses the reaction 2 H2O2 = O2 + 2 H2O. Catalyzes the degradation of hydrogen peroxide (H(2)O(2)) generated by peroxisomal oxidases to water and oxygen, thereby protecting cells from the toxic effects of hydrogen peroxide. Promotes growth of cells including T-cells, B-cells, myeloid leukemia cells, melanoma cells, mastocytoma cells and normal and transformed fibroblast cells. In Canis lupus familiaris (Dog), this protein is Catalase (CAT).